Consider the following 171-residue polypeptide: Peptide deformylase (171 aa).

Positions 94 and 136 each coordinate Fe cation. Glu-137 is an active-site residue. His-140 provides a ligand contact to Fe cation.

Belongs to the polypeptide deformylase family. Requires Fe(2+) as cofactor.

It carries out the reaction N-terminal N-formyl-L-methionyl-[peptide] + H2O = N-terminal L-methionyl-[peptide] + formate. In terms of biological role, removes the formyl group from the N-terminal Met of newly synthesized proteins. Requires at least a dipeptide for an efficient rate of reaction. N-terminal L-methionine is a prerequisite for activity but the enzyme has broad specificity at other positions. This is Peptide deformylase from Afipia carboxidovorans (strain ATCC 49405 / DSM 1227 / KCTC 32145 / OM5) (Oligotropha carboxidovorans).